Reading from the N-terminus, the 86-residue chain is Photosystem I reaction center subunit PsaK (86 aa).

Residues 15–34 form a helical membrane-spanning segment; that stretch reads PWSTQVAMVMITCNLLAIVA.

It belongs to the PsaG/PsaK family.

The protein resides in the plastid. Its subcellular location is the chloroplast thylakoid membrane. The polypeptide is Photosystem I reaction center subunit PsaK (Pyropia yezoensis (Susabi-nori)).